A 217-amino-acid polypeptide reads, in one-letter code: MOB kinase activator-like 2 (217 aa).

Positions 15 to 38 are disordered; it reads GKESIRGNYKPKKHPRGSSRHTMR. Over residues 23–38 the composition is skewed to basic residues; that stretch reads YKPKKHPRGSSRHTMR. Positions 89, 94, 167, and 172 each coordinate Zn(2+).

Belongs to the MOB1/phocein family.

The protein is MOB kinase activator-like 2 (mob2) of Dictyostelium discoideum (Social amoeba).